Consider the following 337-residue polypeptide: tRNA-dihydrouridine synthase B (337 aa).

Residues 19-21 (PMA) and Gln-73 each bind FMN. The active-site Proton donor is the Cys-103. FMN is bound by residues Lys-142, 203-205 (NGD), and 227-228 (GR).

This sequence belongs to the Dus family. DusB subfamily. Requires FMN as cofactor.

The enzyme catalyses a 5,6-dihydrouridine in tRNA + NAD(+) = a uridine in tRNA + NADH + H(+). It catalyses the reaction a 5,6-dihydrouridine in tRNA + NADP(+) = a uridine in tRNA + NADPH + H(+). Functionally, catalyzes the synthesis of 5,6-dihydrouridine (D), a modified base found in the D-loop of most tRNAs, via the reduction of the C5-C6 double bond in target uridines. This is tRNA-dihydrouridine synthase B from Pseudomonas putida (strain ATCC 47054 / DSM 6125 / CFBP 8728 / NCIMB 11950 / KT2440).